The chain runs to 321 residues: Cytochrome c biogenesis protein CcsA (321 aa).

The next 8 membrane-spanning stretches (helical) occupy residues 9-29 (ILTHISFSIISVVITIQLMNL), 44-64 (GMIATFFSITGLLVTRWIYSG), 71-91 (LYESLIFLSWSFSIIHMVPYF), 98-118 (FSAITAPSAIFTQGFATSGLL), 143-163 (MLLSYAALLCGSLLSVALLVI), 225-245 (VISLGFIFLTIGILSGAVWAN), 252-272 (WNWDPKEIWAFITWAIFAIYL), and 286-306 (AIVASIGFLIIWICYFGVNLL).

This sequence belongs to the CcmF/CycK/Ccl1/NrfE/CcsA family. As to quaternary structure, may interact with Ccs1.

The protein resides in the plastid. The protein localises to the chloroplast thylakoid membrane. Required during biogenesis of c-type cytochromes (cytochrome c6 and cytochrome f) at the step of heme attachment. This chain is Cytochrome c biogenesis protein CcsA, found in Acorus calamus var. americanus (American sweet flag).